The sequence spans 197 residues: Probable GTP-binding protein EngB (197 aa).

The EngB-type G domain occupies 2–186 (KVKEVIFAGR…KRDLKQYLLS (185 aa)). GTP-binding positions include 10 to 17 (GRSNVGKS), 35 to 39 (GTTIR), 52 to 55 (DLPG), 132 to 135 (NKMD), and 166 to 168 (VCA). Mg(2+)-binding residues include serine 17 and threonine 37.

The protein belongs to the TRAFAC class TrmE-Era-EngA-EngB-Septin-like GTPase superfamily. EngB GTPase family. It depends on Mg(2+) as a cofactor.

Necessary for normal cell division and for the maintenance of normal septation. The polypeptide is Probable GTP-binding protein EngB (Archaeoglobus fulgidus (strain ATCC 49558 / DSM 4304 / JCM 9628 / NBRC 100126 / VC-16)).